The sequence spans 405 residues: Prenyltransferase phqA (405 aa).

3 residues coordinate dimethylallyl diphosphate: Tyr-195, Lys-262, and Gln-332.

This sequence belongs to the tryptophan dimethylallyltransferase family.

Its pathway is alkaloid biosynthesis. Prenyltransferase; part of the gene cluster that mediates the biosynthesis of paraherquamide, a fungal indole alkaloid that belongs to a family of natural products containing a characteristic bicyclo[2.2.2]diazaoctane core. The first steps in the biosynthesis of paraherquamide is the production of the beta-methyl-proline precursor from L-isoleucine. They require oxidation of a terminally hydroxylated L-isoleucine to the corresponding aldehyde by enzymes which have still to be identified. Spontaneous cyclization and dehydration would yield the 4-methyl pyrolline-5-carboxylic acid, which is then reduced by the pyrroline-5-carboxylate reductase phqD leading to the beta-methyl-proline precursor. The next step of paraherquamide biosynthesis involves coupling of beta-methyl-proline and L-tryptophan by the bimodular NRPS phqB, to produce a monooxopiperazine intermediate. The reductase (R) domain of phqB utilizes NADPH for hydride transfer to reduce the thioester bond of the T domain-tethered linear dipeptide to a hemithioaminal intermediate, which spontaneously cleaves the C-S bond to release the aldehyde product. This compound undergoes spontaneous cyclization and dehydration to give a dienamine which is reverse prenylated at C-2 by the reverse prenyltransferase phqJ. The other prenyltransferase present in the cluster, phqI may be a redundant gene in the pathway. During biosynthetic assembly, the key step to produce the polycyclic core is catalyzed by the bifunctional reductase and intramolecular [4+2] Diels-Alderase, phqE, resulting in formation of the [2.2.2] diazaoctane intermediate preparaherquamide. Following formation of preparaherquamide, an indole 2,3-epoxidation-initiated pinacol-like rearrangement is catalyzed by the phqK FAD-dependent monooxygenase. The prenyltransferase phqA, the cytochrome P450 monooxygenase phqL, and the FAD-linked oxidoreductase phqH (or the cytochrome P450 monooxygenase phqM), are proposed to be involved in the formation of the pyran ring. The FAD-dependent monooxygenase phqK is likely responsible for generation of the spiro-oxindole, and the N-methylation is likely mediated by the phqN methyltransferase leading to the isolable natural product paraherquamide F. However, the order of these biosynthetic steps has still to be determined. In late-stage paraherquamide biosynthesis, the third P450 monooxygenase, phqO, is probably responsible for the C-14 hydroxylation, transforming paraherquamide F to paraherquamide G, and paraherquamide E to the final product paraherquamide A. The expansion from the 6-membered ring pyran (in paraherquamides F and G) to the 7-membered dioxepin ring (in paraherquamides A and E) represents a poorly understood but intriguing process that probably involves the 2-oxoglutarate-dependent dioxygenase phqC. Finally, the remaining members of the paraherquamide cluster, including phqI as well as phqM (or phqH), do not have a clearly prescribed role and appear to be redundant. The sequence is that of Prenyltransferase phqA from Penicillium fellutanum.